The following is an 843-amino-acid chain: Neuroligin-1 (843 aa).

The first 45 residues, 1–45, serve as a signal peptide directing secretion; that stretch reads MALPRCMWPNYVWRAMMACVVHRGSGAPLTLCLLGCLLQTFHVLS. Residues 46–697 are Extracellular-facing; sequence QKLDDVDPLV…DQRDYSTELS (652 aa). N109 carries N-linked (GlcNAc...) (complex) asparagine glycosylation. 2 disulfide bridges follow: C117–C153 and C172–C181. N-linked (GlcNAc...) (complex) asparagine glycosylation is found at N303 and N343. 2 cysteine pairs are disulfide-bonded: C342-C353 and C512-C546. N547 carries N-linked (GlcNAc...) asparagine glycosylation. The tract at residues 647-688 is disordered; sequence TKVPSTDITLRPTRKNSTPVTSAFPTAKQDDPKQQPSPFSVD. Residues 661–670 are compositionally biased toward polar residues; that stretch reads KNSTPVTSAF. O-linked (GalNAc...) serine glycosylation is found at S683 and S686. Residues 698 to 718 traverse the membrane as a helical segment; it reads VTIAVGASLLFLNILAFAALY. Residues 719–843 lie on the Cytoplasmic side of the membrane; it reads YKKDKRRHDV…HPHSHSTTRV (125 aa). Residues 822-843 form a disordered region; sequence GGQNNTLPHPHPHPHSHSTTRV. A compositionally biased stretch (basic residues) spans 831–843; the sequence is PHPHPHSHSTTRV.

It belongs to the type-B carboxylesterase/lipase family. Interacts with neurexins NRXN1, NRXN2 and NRXN3. Interaction with neurexins is mediated by heparan sulfate glycan modification on neurexin. Interacts with NLGN3. Interacts (via its C-terminus) with DLG4/PSD-95 (via PDZ domain 3). Interacts with GOPC. Interacts with AIP1 and PDZRN3. In terms of processing, the N-terminus is blocked. As to expression, expressed in brain, almost exclusively in neurons, and spinal cord. Detected in pancreas islet beta cells.

It is found in the cell membrane. The protein resides in the postsynaptic density. Its subcellular location is the synaptic cleft. The protein localises to the synaptic cell membrane. Its function is as follows. Cell surface protein involved in cell-cell-interactions via its interactions with neurexin family members. Plays a role in synapse function and synaptic signal transmission, and probably mediates its effects by recruiting and clustering other synaptic proteins. May promote the initial formation of synapses, but is not essential for this. In vitro, triggers the de novo formation of presynaptic structures. May be involved in specification of excitatory synapses. Required to maintain wakefulness quality and normal synchrony of cerebral cortex activity during wakefulness and sleep. The protein is involved in nervous system development. In Rattus norvegicus (Rat), this protein is Neuroligin-1 (Nlgn1).